Consider the following 147-residue polypeptide: Large ribosomal subunit protein uL15 (147 aa).

Residues 1-13 (MELHSLKAAEGSR) are compositionally biased toward basic and acidic residues. The tract at residues 1 to 57 (MELHSLKAAEGSRKVRNRVGRGTSSGNGKTSGRGQKGQKSRSGGGVRPGFEGGQTEL) is disordered. Composition is skewed to gly residues over residues 23 to 35 (TSSGNGKTSGRGQ) and 42 to 52 (SGGGVRPGFEG).

This sequence belongs to the universal ribosomal protein uL15 family. In terms of assembly, part of the 50S ribosomal subunit.

Binds to the 23S rRNA. In Lactococcus lactis subsp. lactis (strain IL1403) (Streptococcus lactis), this protein is Large ribosomal subunit protein uL15.